A 350-amino-acid chain; its full sequence is MAYKITSLAGDGIGPEIMASGIKILEAIAAKYNHTFEIESHPFGGAGIDAAGDPIPPETLKACQNADAILLGAIGGPKWDNAPKRPEDGLLALRKALGLFANIRPIQVPSSITHLSPLKKEIVENTDFVVVRELTGGLYFGEPKHWDDVAAVDSLTYTRVEIERIIEKAFEIASTRNKKVTSVDKANVLASSKLWRKIAEEVASRHPDITLEHLYVDAAAMLMIQRPTTFDVIVTENLFGDILSDEASVITGSLGMLPSASHAENGPSLYEPIHGSAPDIANQNIANPMSMISSVSMMLRQSFSLFKEADAIDAATARTMQAGFLTADLGGNTSTTDFTNEVLKQIEGGE.

76–87 (GPKWDNAPKRPE) contributes to the NAD(+) binding site. 4 residues coordinate substrate: R94, R104, R132, and D217. Mg(2+) contacts are provided by D217, D241, and D245. 275 to 287 (GSAPDIANQNIAN) serves as a coordination point for NAD(+).

This sequence belongs to the isocitrate and isopropylmalate dehydrogenases family. LeuB type 1 subfamily. Homodimer. Mg(2+) serves as cofactor. The cofactor is Mn(2+).

It localises to the cytoplasm. The enzyme catalyses (2R,3S)-3-isopropylmalate + NAD(+) = 4-methyl-2-oxopentanoate + CO2 + NADH. Its pathway is amino-acid biosynthesis; L-leucine biosynthesis; L-leucine from 3-methyl-2-oxobutanoate: step 3/4. In terms of biological role, catalyzes the oxidation of 3-carboxy-2-hydroxy-4-methylpentanoate (3-isopropylmalate) to 3-carboxy-4-methyl-2-oxopentanoate. The product decarboxylates to 4-methyl-2 oxopentanoate. This Listeria innocua serovar 6a (strain ATCC BAA-680 / CLIP 11262) protein is 3-isopropylmalate dehydrogenase.